A 249-amino-acid chain; its full sequence is UDP-N-acetyl-D-mannosaminuronic acid transferase (249 aa).

Belongs to the glycosyltransferase 26 family.

It catalyses the reaction UDP-N-acetyl-alpha-D-mannosaminouronate + N-acetyl-alpha-D-glucosaminyl-di-trans,octa-cis-undecaprenyl diphosphate = beta-D-ManNAcA-(1-&gt;4)-alpha-D-GlcNAc-di-trans,octa-cis-undecaprenyl diphosphate + UDP + H(+). The protein operates within bacterial outer membrane biogenesis; enterobacterial common antigen biosynthesis. In terms of biological role, catalyzes the synthesis of Und-PP-GlcNAc-ManNAcA (Lipid II), the second lipid-linked intermediate involved in enterobacterial common antigen (ECA) synthesis. The polypeptide is UDP-N-acetyl-D-mannosaminuronic acid transferase (Pectobacterium carotovorum subsp. carotovorum (strain PC1)).